Here is a 233-residue protein sequence, read N- to C-terminus: Small ribosomal subunit protein uS2 (233 aa).

It belongs to the universal ribosomal protein uS2 family.

This chain is Small ribosomal subunit protein uS2, found in Bacillus anthracis.